A 113-amino-acid chain; its full sequence is U11-theraphotoxin-Hhn1a (113 aa).

The first 21 residues, 1 to 21 (MNTVRVTFLLVFVLAVSLGQA), serve as a signal peptide directing secretion. The propeptide occupies 22–74 (DKDENRMEMQEKTEQGKSYLDFAENLLLQKLEELEAKPLEEDSEESRNSRQKR). The span at 57–69 (AKPLEEDSEESRN) shows a compositional bias: basic and acidic residues. Residues 57–83 (AKPLEEDSEESRNSRQKRCIGEGVPCD) are disordered. 3 disulfides stabilise this stretch: C75–C90, C82–C95, and C89–C110.

Belongs to the neurotoxin 14 (magi-1) family. 01 (HNTX-16) subfamily. In terms of tissue distribution, expressed by the venom gland.

It localises to the secreted. Its function is as follows. Probable ion channel inhibitor. The protein is U11-theraphotoxin-Hhn1a of Cyriopagopus hainanus (Chinese bird spider).